The primary structure comprises 208 residues: FMN-dependent NADH:quinone oxidoreductase (208 aa).

99–102 (MWNF) is a binding site for FMN.

This sequence belongs to the azoreductase type 1 family. Homodimer. FMN is required as a cofactor.

The catalysed reaction is 2 a quinone + NADH + H(+) = 2 a 1,4-benzosemiquinone + NAD(+). It catalyses the reaction N,N-dimethyl-1,4-phenylenediamine + anthranilate + 2 NAD(+) = 2-(4-dimethylaminophenyl)diazenylbenzoate + 2 NADH + 2 H(+). Functionally, quinone reductase that provides resistance to thiol-specific stress caused by electrophilic quinones. Its function is as follows. Also exhibits azoreductase activity. Catalyzes the reductive cleavage of the azo bond in aromatic azo compounds to the corresponding amines. This Brevibacillus brevis (strain 47 / JCM 6285 / NBRC 100599) protein is FMN-dependent NADH:quinone oxidoreductase.